A 925-amino-acid polypeptide reads, in one-letter code: Coronin-7 (925 aa).

4 WD repeats span residues 75–115 (CHSD…QALP), 124–163 (PEDL…PLTE), 166–205 (AHGD…RASQ), and 209–253 (AHEN…SALA). The interval 419–461 (VGDADASEGFSSPPSSLTSPSTPSSLGPSLSSTSGIGTSPSLR) is disordered. The segment covering 429 to 460 (SSPPSSLTSPSTPSSLGPSLSSTSGIGTSPSL) has biased composition (low complexity). Phosphoserine occurs at positions 462 and 465. Lys472 participates in a covalent cross-link: Glycyl lysine isopeptide (Lys-Gly) (interchain with G-Cter in ubiquitin). 3 WD repeats span residues 542–582 (QNGA…LEEV), 592–632 (GHTE…DRLK), and 635–674 (GHQD…EPLQ). A Glycyl lysine isopeptide (Lys-Gly) (interchain with G-Cter in ubiquitin) cross-link involves residue Lys680. A WD 8 repeat occupies 728-768 (DVAPSTLLPSYDPDTGLVLLTGKGDTRVFLYELLPESPFFL). Residues 858–925 (QPPDMSPVSQ…FEGVDEDEWD (68 aa)) form a disordered region. A compositionally biased stretch (low complexity) spans 866–882 (SQAPREAPARRAPSSAQ). Over residues 884–896 (LEEKSDQQKKEEL) the composition is skewed to basic and acidic residues. Position 915 is a phosphoserine (Ser915).

This sequence belongs to the WD repeat coronin family. Interacts with clathrin adapter AP1 complex. This interaction takes place at Golgi membranes and not AP1-positive endosomal membranes. Interacts (when ubiquitinated at Lys-472) with EPS15. Post-translationally, the membrane-associated form is phosphorylated on tyrosine residues. Ubiquitinated via 'Lys-33'-linked ubiquitin chains by the BCR(KLHL20) E3 ubiquitin ligase complex: 'Lys-33'-linked ubiquitination promotes interaction with EPS15 and facilitates actin polymerization at the trans-Golgi network, thereby facilitating post-Golgi trafficking. Deubiquitinated by ZRANB1/TRABID. As to expression, widely expressed. Expressed in the spleen, peripheral leukocytes, testes, brain, thymus and small intestine.

It is found in the golgi apparatus membrane. Its subcellular location is the golgi apparatus. The protein resides in the trans-Golgi network. The protein localises to the cytoplasmic vesicle. It localises to the cytoplasm. It is found in the cytosol. Functionally, F-actin regulator involved in anterograde Golgi to endosome transport: upon ubiquitination via 'Lys-33'-linked ubiquitin chains by the BCR(KLHL20) E3 ubiquitin ligase complex, interacts with EPS15 and localizes to the trans-Golgi network, where it promotes actin polymerization, thereby facilitating post-Golgi trafficking. May play a role in the maintenance of the Golgi apparatus morphology. The sequence is that of Coronin-7 (CORO7) from Homo sapiens (Human).